A 350-amino-acid polypeptide reads, in one-letter code: Xylene/toluene monooxygenase electron transfer component XylA (350 aa).

The 2Fe-2S ferredoxin-type domain occupies 16–108; the sequence is PESTVSVRGQ…DLEIELDTVL (93 aa). [2Fe-2S] cluster contacts are provided by Cys-52, Cys-57, Cys-60, and Cys-92. The tract at residues 109–350 is ferredoxin--NADH reductase; that stretch reads GQALVPIETS…ADRFYNRPPC (242 aa). Positions 114–213 constitute an FAD-binding FR-type domain; it reads PIETSALISK…RAPYGQFGLH (100 aa).

Belongs to the bacterial ring-hydroxylating dioxygenase ferredoxin reductase family. Monomer. The xylene/toluene monooxygenase is composed of two subunits: the electron transfer component XylA and the hydroxylase component XylM. The cofactor is FAD. [2Fe-2S] cluster is required as a cofactor.

The protein resides in the cell inner membrane. The enzyme catalyses 2 reduced [2Fe-2S]-[ferredoxin] + NAD(+) + H(+) = 2 oxidized [2Fe-2S]-[ferredoxin] + NADH. Its activity is regulated as follows. The reductase activity is completely inhibited by quercetin (a common inhibitor of mammalian oxidoreductases) and p-chloromercuribenzoate, but not by iodoacetimide, N-ethylmaleimide and pyrrazole. Component of a monooxygenase that catalyzes the first step in the degradation of xylenes and toluenes. XylA is responsible for the transport of electrons from the electron donor NADH to the terminal hydroxylase component, XylM. The sequence is that of Xylene/toluene monooxygenase electron transfer component XylA from Pseudomonas putida (Arthrobacter siderocapsulatus).